The sequence spans 252 residues: Probable transcriptional regulatory protein RF_0799 (252 aa).

Residues 1-21 (MAGHSKFKNIQHRKGAQDKKR) form a disordered region.

The protein belongs to the TACO1 family.

Its subcellular location is the cytoplasm. This chain is Probable transcriptional regulatory protein RF_0799, found in Rickettsia felis (strain ATCC VR-1525 / URRWXCal2) (Rickettsia azadi).